Consider the following 148-residue polypeptide: Single-stranded DNA-binding protein 2 (148 aa).

The SSB domain maps to 6–108 (MNHITVSGLV…IEAESFGHDL (103 aa)).

Homotetramer.

The sequence is that of Single-stranded DNA-binding protein 2 (ssb2) from Tropheryma whipplei (strain TW08/27) (Whipple's bacillus).